The chain runs to 604 residues: Sulfite reductase [NADPH] flavoprotein alpha-component (604 aa).

Residues 65-203 (VTILYGSQTG…AAGQWHADVL (139 aa)) enclose the Flavodoxin-like domain. FMN contacts are provided by residues 71-76 (SQTGNG), 118-121 (STHG), and 154-163 (LGDSSYEFFC). In terms of domain architecture, FAD-binding FR-type spans 236–453 (QNPYSAEVLV…VEPNKHFRLP (218 aa)). FAD contacts are provided by residues T324, L358, 392-395 (RLYS), 410-412 (TVA), and 425-428 (GGAS). NADP(+) contacts are provided by residues 524 to 525 (SR), 530 to 534 (KIYVQ), and D566. Position 604 (Y604) interacts with FAD.

Belongs to the NADPH-dependent sulphite reductase flavoprotein subunit CysJ family. It in the N-terminal section; belongs to the flavodoxin family. The protein in the C-terminal section; belongs to the flavoprotein pyridine nucleotide cytochrome reductase family. In terms of assembly, alpha(8)-beta(8). The alpha component is a flavoprotein, the beta component is a hemoprotein. FAD serves as cofactor. FMN is required as a cofactor.

It carries out the reaction hydrogen sulfide + 3 NADP(+) + 3 H2O = sulfite + 3 NADPH + 4 H(+). It participates in sulfur metabolism; hydrogen sulfide biosynthesis; hydrogen sulfide from sulfite (NADPH route): step 1/1. Functionally, component of the sulfite reductase complex that catalyzes the 6-electron reduction of sulfite to sulfide. This is one of several activities required for the biosynthesis of L-cysteine from sulfate. The flavoprotein component catalyzes the electron flow from NADPH -&gt; FAD -&gt; FMN to the hemoprotein component. The chain is Sulfite reductase [NADPH] flavoprotein alpha-component from Shewanella sp. (strain ANA-3).